A 293-amino-acid chain; its full sequence is Ribosomal protein L11 methyltransferase (293 aa).

S-adenosyl-L-methionine is bound by residues Thr145, Gly166, Asp188, and Asn230.

It belongs to the methyltransferase superfamily. PrmA family.

The protein localises to the cytoplasm. The catalysed reaction is L-lysyl-[protein] + 3 S-adenosyl-L-methionine = N(6),N(6),N(6)-trimethyl-L-lysyl-[protein] + 3 S-adenosyl-L-homocysteine + 3 H(+). Functionally, methylates ribosomal protein L11. The chain is Ribosomal protein L11 methyltransferase from Haemophilus ducreyi (strain 35000HP / ATCC 700724).